Consider the following 102-residue polypeptide: Small ribosomal subunit protein uS10 (102 aa).

Residues 35–58 form a disordered region; the sequence is SGPIPLPTKTLEIPSRKSPDGEGT.

The protein belongs to the universal ribosomal protein uS10 family. In terms of assembly, part of the 30S ribosomal subunit.

Its function is as follows. Involved in the binding of tRNA to the ribosomes. This is Small ribosomal subunit protein uS10 from Halorubrum lacusprofundi (strain ATCC 49239 / DSM 5036 / JCM 8891 / ACAM 34).